A 185-amino-acid polypeptide reads, in one-letter code: Ethylene-responsive transcription factor ERF017 (185 aa).

The AP2/ERF DNA-binding region spans 11 to 68; it reads KYKGVRKRKWGKWVSEIRLPNSRERIWLGSYDTPEKAARAFDAALYCLRGNNAKFNFP.

The protein belongs to the AP2/ERF transcription factor family. ERF subfamily.

It is found in the nucleus. Its function is as follows. Probably acts as a transcriptional activator. Binds to the GCC-box pathogenesis-related promoter element. May be involved in the regulation of gene expression by stress factors and by components of stress signal transduction pathways. This is Ethylene-responsive transcription factor ERF017 (ERF017) from Arabidopsis thaliana (Mouse-ear cress).